A 217-amino-acid polypeptide reads, in one-letter code: Dihydroflavonol 4-reductase (217 aa).

Residues lysine 27 and tyrosine 146 each coordinate NADP(+).

The protein belongs to the NAD(P)-dependent epimerase/dehydratase family. Dihydroflavonol-4-reductase subfamily.

The catalysed reaction is a (2R,3S,4S)-leucoanthocyanidin + NADP(+) = a (2R,3R)-dihydroflavonol + NADPH + H(+). It catalyses the reaction (2S)-flavan-4-ol + NADP(+) = (2S)-flavanone + NADPH + H(+). Its pathway is pigment biosynthesis; anthocyanin biosynthesis. Its function is as follows. Bifunctional enzyme involved in flavonoid metabolism. The chain is Dihydroflavonol 4-reductase (DFR1) from Medicago sativa (Alfalfa).